A 367-amino-acid polypeptide reads, in one-letter code: Glutamate 5-kinase (367 aa).

K8 lines the ATP pocket. Positions 49, 136, and 148 each coordinate substrate. ATP contacts are provided by residues 168–169 (TD) and 210–216 (TGGMVTK). A PUA domain is found at 275 to 353 (AGKLYLDEGA…REISTILGYA (79 aa)).

Belongs to the glutamate 5-kinase family.

The protein localises to the cytoplasm. It carries out the reaction L-glutamate + ATP = L-glutamyl 5-phosphate + ADP. It functions in the pathway amino-acid biosynthesis; L-proline biosynthesis; L-glutamate 5-semialdehyde from L-glutamate: step 1/2. Its function is as follows. Catalyzes the transfer of a phosphate group to glutamate to form L-glutamate 5-phosphate. The protein is Glutamate 5-kinase of Nostoc punctiforme (strain ATCC 29133 / PCC 73102).